Here is a 273-residue protein sequence, read N- to C-terminus: 2,3,4,5-tetrahydropyridine-2,6-dicarboxylate N-succinyltransferase (273 aa).

Substrate is bound by residues Arg104 and Asp141.

This sequence belongs to the transferase hexapeptide repeat family. In terms of assembly, homotrimer.

The protein localises to the cytoplasm. The catalysed reaction is (S)-2,3,4,5-tetrahydrodipicolinate + succinyl-CoA + H2O = (S)-2-succinylamino-6-oxoheptanedioate + CoA. The protein operates within amino-acid biosynthesis; L-lysine biosynthesis via DAP pathway; LL-2,6-diaminopimelate from (S)-tetrahydrodipicolinate (succinylase route): step 1/3. The polypeptide is 2,3,4,5-tetrahydropyridine-2,6-dicarboxylate N-succinyltransferase (Thioalkalivibrio sulfidiphilus (strain HL-EbGR7)).